Reading from the N-terminus, the 231-residue chain is Isoprenyl transferase (231 aa).

Asp14 is an active-site residue. Mg(2+) is bound at residue Asp14. Substrate contacts are provided by residues Gly15–Arg18, Trp19, Arg27, His31, and Ser59–Glu61. The active-site Proton acceptor is Asn62. Residues Trp63, Arg65, Arg176, and Arg182 to Ser184 contribute to the substrate site. Glu195 contributes to the Mg(2+) binding site.

Belongs to the UPP synthase family. Homodimer. It depends on Mg(2+) as a cofactor.

Functionally, catalyzes the condensation of isopentenyl diphosphate (IPP) with allylic pyrophosphates generating different type of terpenoids. The protein is Isoprenyl transferase of Aquifex pyrophilus.